The sequence spans 238 residues: Uridylate kinase (238 aa).

Residue 12–15 participates in ATP binding; sequence KLSG. An involved in allosteric activation by GTP region spans residues 20-25; that stretch reads GDEGFG. Residue Gly-54 coordinates UMP. Positions 55 and 59 each coordinate ATP. UMP-binding positions include Asp-74 and 135 to 142; that span reads TGSPFFTT. Positions 162, 168, and 171 each coordinate ATP.

This sequence belongs to the UMP kinase family. Homohexamer.

It localises to the cytoplasm. The catalysed reaction is UMP + ATP = UDP + ADP. The protein operates within pyrimidine metabolism; CTP biosynthesis via de novo pathway; UDP from UMP (UMPK route): step 1/1. With respect to regulation, allosterically activated by GTP. Inhibited by UTP. In terms of biological role, catalyzes the reversible phosphorylation of UMP to UDP. The protein is Uridylate kinase of Histophilus somni (strain 129Pt) (Haemophilus somnus).